The following is a 114-amino-acid chain: Large ribosomal subunit protein bL20c (114 aa).

This sequence belongs to the bacterial ribosomal protein bL20 family.

It localises to the plastid. The protein resides in the chloroplast. Binds directly to 23S ribosomal RNA and is necessary for the in vitro assembly process of the 50S ribosomal subunit. It is not involved in the protein synthesizing functions of that subunit. This chain is Large ribosomal subunit protein bL20c, found in Tetradesmus obliquus (Green alga).